A 232-amino-acid chain; its full sequence is Lipoprotein-releasing system ATP-binding protein LolD (232 aa).

An ABC transporter domain is found at 11–232 (IEVTDLQRAF…LHDGRLIEEY (222 aa)). 47–54 (GPSGAGKS) is an ATP binding site.

Belongs to the ABC transporter superfamily. Lipoprotein translocase (TC 3.A.1.125) family. In terms of assembly, the complex is composed of two ATP-binding proteins (LolD) and two transmembrane proteins (LolC and LolE).

Its subcellular location is the cell inner membrane. Functionally, part of the ABC transporter complex LolCDE involved in the translocation of mature outer membrane-directed lipoproteins, from the inner membrane to the periplasmic chaperone, LolA. Responsible for the formation of the LolA-lipoprotein complex in an ATP-dependent manner. The chain is Lipoprotein-releasing system ATP-binding protein LolD from Zymomonas mobilis subsp. mobilis (strain ATCC 10988 / DSM 424 / LMG 404 / NCIMB 8938 / NRRL B-806 / ZM1).